A 258-amino-acid polypeptide reads, in one-letter code: Aspartate/glutamate leucyltransferase (258 aa).

The protein belongs to the R-transferase family. Bpt subfamily.

The protein resides in the cytoplasm. It catalyses the reaction N-terminal L-glutamyl-[protein] + L-leucyl-tRNA(Leu) = N-terminal L-leucyl-L-glutamyl-[protein] + tRNA(Leu) + H(+). The enzyme catalyses N-terminal L-aspartyl-[protein] + L-leucyl-tRNA(Leu) = N-terminal L-leucyl-L-aspartyl-[protein] + tRNA(Leu) + H(+). In terms of biological role, functions in the N-end rule pathway of protein degradation where it conjugates Leu from its aminoacyl-tRNA to the N-termini of proteins containing an N-terminal aspartate or glutamate. This Rhizobium etli (strain ATCC 51251 / DSM 11541 / JCM 21823 / NBRC 15573 / CFN 42) protein is Aspartate/glutamate leucyltransferase.